We begin with the raw amino-acid sequence, 174 residues long: uncharacterized protein (174 aa).

This is an uncharacterized protein from Aquifex aeolicus (strain VF5).